The following is a 424-amino-acid chain: Endoglucanase (424 aa).

An N-terminal signal peptide occupies residues 1–19 (MHRCMPLVAASMAALMLAG). Residue C20 is the site of N-palmitoyl cysteine attachment. Residue C20 is the site of S-diacylglycerol cysteine attachment. Residues 20-43 (CGGGDGDTTLSTAAATDTTTLKTA) constitute a propeptide that is removed on maturation. E247 functions as the Proton donor in the catalytic mechanism. The active-site Nucleophile is E359.

The protein belongs to the glycosyl hydrolase 5 (cellulase A) family.

It is found in the cell membrane. It catalyses the reaction Endohydrolysis of (1-&gt;4)-beta-D-glucosidic linkages in cellulose, lichenin and cereal beta-D-glucans.. This chain is Endoglucanase (egl), found in Ralstonia nicotianae (strain ATCC BAA-1114 / GMI1000) (Ralstonia solanacearum).